The primary structure comprises 217 residues: Adenylate kinase (217 aa).

An ATP-binding site is contributed by 11–16 (GAGKGT). Residues 31-60 (STGDMFREAMANKTPVGLEAKSYIDKGDLV) form an NMP region. AMP contacts are provided by residues Thr32, Arg37, 58–60 (DLV), 86–89 (GFPR), and Gln93. The LID stretch occupies residues 127–165 (ARFMCKNCGATYNKFSKKPKVEGTCDRCGGHEFYQREDD). Arg128 lines the ATP pocket. Cys131 and Cys134 together coordinate Zn(2+). Position 137 to 138 (137 to 138 (TY)) interacts with ATP. Zn(2+) is bound by residues Cys151 and Cys154. 2 residues coordinate AMP: Arg162 and Arg173. Gln201 is a binding site for ATP.

It belongs to the adenylate kinase family. In terms of assembly, monomer.

It is found in the cytoplasm. The enzyme catalyses AMP + ATP = 2 ADP. Its pathway is purine metabolism; AMP biosynthesis via salvage pathway; AMP from ADP: step 1/1. Functionally, catalyzes the reversible transfer of the terminal phosphate group between ATP and AMP. Plays an important role in cellular energy homeostasis and in adenine nucleotide metabolism. This chain is Adenylate kinase, found in Lactobacillus delbrueckii subsp. bulgaricus (strain ATCC 11842 / DSM 20081 / BCRC 10696 / JCM 1002 / NBRC 13953 / NCIMB 11778 / NCTC 12712 / WDCM 00102 / Lb 14).